The following is a 220-amino-acid chain: WAP four-disulfide core domain protein 1 (220 aa).

Positions 1-31 (MPLTGVGPGSCRRQIIRALCLLLLLLHAGSA) are cleaved as a signal peptide. The interval 46-70 (KSRAEEAGAPGGPRQPRADRCPPPP) is disordered. The WAP domain maps to 59–108 (RQPRADRCPPPPRTLPPGACQAARCQADSECPRHRRCCYNGCAYACLEAV). 4 cysteine pairs are disulfide-bonded: cysteine 66–cysteine 96, cysteine 78–cysteine 100, cysteine 83–cysteine 95, and cysteine 89–cysteine 104. The interval 199–220 (EYPEGDSKNVAEPGRGQQKHFQ) is disordered.

It is found in the secreted. Has growth inhibitory activity. This is WAP four-disulfide core domain protein 1 (WFDC1) from Homo sapiens (Human).